A 535-amino-acid chain; its full sequence is Keratin, type II cytoskeletal 79 (535 aa).

2 stretches are compositionally biased toward polar residues: residues M1–T12 and Q28–V38. The segment at M1 to S53 is disordered. The head stretch occupies residues M1–E141. Residues G43–S53 are compositionally biased toward gly residues. Positions E142 to L177 are coil 1A. The IF rod domain maps to E142–M457. The tract at residues Q178–F198 is linker 1. Positions I199–V290 are coil 1B. The segment at Q291–I314 is linker 12. A coil 2 region spans residues I315–E453. Residues E454–Y535 form a tail region.

It belongs to the intermediate filament family. As to quaternary structure, heterotetramer of two type I and two type II keratins.

The polypeptide is Keratin, type II cytoskeletal 79 (KRT79) (Bos taurus (Bovine)).